We begin with the raw amino-acid sequence, 91 residues long: Large ribosomal subunit protein uL23c (91 aa).

This sequence belongs to the universal ribosomal protein uL23 family. As to quaternary structure, part of the 50S ribosomal subunit.

It localises to the plastid. The protein localises to the chloroplast. Binds to 23S rRNA. The protein is Large ribosomal subunit protein uL23c (rpl23) of Picea abies (Norway spruce).